The primary structure comprises 498 residues: Protein YhjJ (498 aa).

A signal peptide spans 1-24 (MQGTKIRLLAGGLLMMATAGYVQA).

The protein belongs to the peptidase M16 family.

The protein resides in the periplasm. The polypeptide is Protein YhjJ (yhjJ) (Escherichia coli (strain K12)).